The sequence spans 228 residues: Ribosomal RNA small subunit methyltransferase G (228 aa).

Residues Gly89, Leu94, 140–141 (VE), and Arg159 contribute to the S-adenosyl-L-methionine site.

It belongs to the methyltransferase superfamily. RNA methyltransferase RsmG family.

The protein localises to the cytoplasm. The catalysed reaction is guanosine(527) in 16S rRNA + S-adenosyl-L-methionine = N(7)-methylguanosine(527) in 16S rRNA + S-adenosyl-L-homocysteine. In terms of biological role, specifically methylates the N7 position of guanine in position 527 of 16S rRNA. This chain is Ribosomal RNA small subunit methyltransferase G, found in Burkholderia ambifaria (strain ATCC BAA-244 / DSM 16087 / CCUG 44356 / LMG 19182 / AMMD) (Burkholderia cepacia (strain AMMD)).